The following is a 257-amino-acid chain: MSLLSKTRELNTLLQKHKGIAVDFKDVARKISEVTVTNVFIVSRRGKILGHSLNELLKSNRINQMLEDRHIPSEYTDKLIDVKQTVSNIGIDDDLSVFPPENRDTFIDSKTTIFPVLGGGERLGTLVLGRVSDDFTDNDLVLGEYAATVLGMEILREKHSEVEQEARDKAAINMAINSLSYSEREAIEHIFEELGGKEGLLIASKVADRVGITRSVIVNALRKLESAGVIESRSLGMKGTFIKVKKEQFLDELEKSN.

A GAF domain region spans residues 1 to 155 (MSLLSKTREL…AATVLGMEIL (155 aa)). The segment at residues 203-222 (ASKVADRVGITRSVIVNALR) is a DNA-binding region (H-T-H motif).

This sequence belongs to the CodY family.

The protein resides in the cytoplasm. DNA-binding global transcriptional regulator which is involved in the adaptive response to starvation and acts by directly or indirectly controlling the expression of numerous genes in response to nutrient availability. During rapid exponential growth, CodY is highly active and represses genes whose products allow adaptation to nutrient depletion. This chain is Global transcriptional regulator CodY, found in Staphylococcus carnosus (strain TM300).